Here is a 664-residue protein sequence, read N- to C-terminus: DNA topoisomerase 4 subunit B (664 aa).

Residues Tyr-7, Asn-47, Asp-74, 114 to 120 (GLHGVGA), and Lys-341 contribute to the ATP site. Positions 386-418 (REAARKAREDARSGKKNKRKDTLLSGKLTPAQS) are disordered. Positions 387 to 398 (EAARKAREDARS) are enriched in basic and acidic residues. One can recognise a Toprim domain in the interval 424-538 (NELYLVEGDS…AGRVFIALPP (115 aa)). 3 residues coordinate Mg(2+): Glu-430, Asp-503, and Asp-505.

Belongs to the type II topoisomerase family. ParE type 2 subfamily. In terms of assembly, heterotetramer composed of ParC and ParE. The cofactor is Mg(2+). Requires Mn(2+) as cofactor. Ca(2+) is required as a cofactor.

The catalysed reaction is ATP-dependent breakage, passage and rejoining of double-stranded DNA.. Its function is as follows. Topoisomerase IV is essential for chromosome segregation. It relaxes supercoiled DNA. Performs the decatenation events required during the replication of a circular DNA molecule. The protein is DNA topoisomerase 4 subunit B of Staphylococcus epidermidis (strain ATCC 35984 / DSM 28319 / BCRC 17069 / CCUG 31568 / BM 3577 / RP62A).